The chain runs to 396 residues: Phosphopentomutase (396 aa).

Asp-14, Asp-286, His-291, Asp-327, His-328, and His-339 together coordinate Mn(2+).

The protein belongs to the phosphopentomutase family. Requires Mn(2+) as cofactor.

It is found in the cytoplasm. It catalyses the reaction 2-deoxy-alpha-D-ribose 1-phosphate = 2-deoxy-D-ribose 5-phosphate. The enzyme catalyses alpha-D-ribose 1-phosphate = D-ribose 5-phosphate. Its pathway is carbohydrate degradation; 2-deoxy-D-ribose 1-phosphate degradation; D-glyceraldehyde 3-phosphate and acetaldehyde from 2-deoxy-alpha-D-ribose 1-phosphate: step 1/2. Functionally, isomerase that catalyzes the conversion of deoxy-ribose 1-phosphate (dRib-1-P) and ribose 1-phosphate (Rib-1-P) to deoxy-ribose 5-phosphate (dRib-5-P) and ribose 5-phosphate (Rib-5-P), respectively. The protein is Phosphopentomutase of Staphylococcus epidermidis (strain ATCC 35984 / DSM 28319 / BCRC 17069 / CCUG 31568 / BM 3577 / RP62A).